We begin with the raw amino-acid sequence, 351 residues long: Histidine protein kinase SaeS (351 aa).

Transmembrane regions (helical) follow at residues 9-29 (IIIG…IAYI) and 40-60 (TLTL…SIFI). The HAMP domain maps to 61–114 (NPLIQKIKQFNIKTKQFANGNYASNDKTFNSPKEIYELNQSFNKMASEITQQMN). The Histidine kinase domain maps to 129–348 (NLAHDLKTPL…TMTVTLHKLD (220 aa)). Residue H132 is modified to Phosphohistidine; by autocatalysis.

Autophosphorylated.

It is found in the cell membrane. The catalysed reaction is ATP + protein L-histidine = ADP + protein N-phospho-L-histidine.. Functionally, member of the two-component regulatory system SaeR/SaeS involved in the regulation of staphylococcal virulence factors in a strain-dependent fashion. Probably functions as a membrane-associated protein kinase that upon sensing the appropriate signal, autophosphorylates and in turn activates the cytosolic response regulator SaeR. The chain is Histidine protein kinase SaeS (saeS) from Staphylococcus aureus (strain bovine RF122 / ET3-1).